The primary structure comprises 148 residues: uncharacterized protein (148 aa).

This is an uncharacterized protein from Bacillus subtilis (strain 168).